The chain runs to 505 residues: MTTTTDELVSYEDALASYDPVMGLEVHVELGTKTKMFCGCSTELGAEPNSQTCPTCLGMPGALPVVNAIGVESAIKIGLALHCEIAEWCRFARKNYFYPDMPKNFQTSQYDEPIAFNGYLDVQLEDGEVFRVEIERAHMEEDTGKSTHVGGATGRIHGASHSLLDYNRAGIPLIEIVTKPIEGAGERAPEVAKAYVAELRELIRALGVSEARMEMGQMRCDVNLSLRPHGREKFGTRSETKNVNSLRSVERAARFEIQRHAAVLNSGGTIIQETRHFHEDTGSTTSGRVKEEAEDYRYFPEPDLVPVAPSRAWVEELRAGLPEQPLARRNRLREEWGVNAHDMQSILNAGAIDPIVATIEAGADAASARKWWMGELARSANESGKALEDLPITPAQVARVAQLVVAGELNDKLARQVIEGVLAGEGTPDEVVEKRGLKVVSDEGALTAAVDEAIAGNPGVADKIRGGKVAAAGALVGAVMKATRGQADAARVKELILEKLGVSEG.

It belongs to the GatB/GatE family. GatB subfamily. In terms of assembly, heterotrimer of A, B and C subunits.

It catalyses the reaction L-glutamyl-tRNA(Gln) + L-glutamine + ATP + H2O = L-glutaminyl-tRNA(Gln) + L-glutamate + ADP + phosphate + H(+). The catalysed reaction is L-aspartyl-tRNA(Asn) + L-glutamine + ATP + H2O = L-asparaginyl-tRNA(Asn) + L-glutamate + ADP + phosphate + 2 H(+). Its function is as follows. Allows the formation of correctly charged Asn-tRNA(Asn) or Gln-tRNA(Gln) through the transamidation of misacylated Asp-tRNA(Asn) or Glu-tRNA(Gln) in organisms which lack either or both of asparaginyl-tRNA or glutaminyl-tRNA synthetases. The reaction takes place in the presence of glutamine and ATP through an activated phospho-Asp-tRNA(Asn) or phospho-Glu-tRNA(Gln). This chain is Aspartyl/glutamyl-tRNA(Asn/Gln) amidotransferase subunit B, found in Streptomyces avermitilis (strain ATCC 31267 / DSM 46492 / JCM 5070 / NBRC 14893 / NCIMB 12804 / NRRL 8165 / MA-4680).